The following is a 378-amino-acid chain: MSHLDNGFRSLTLQRFPATDDVNPLQAWEAADEYLLQQLDDTEIRGPVLILNDAFGALSCALAEHKPYSIGDSYISELATRENLRLNGIDESSVKFLDSTADYPQQPGVVLIKVPKTLALLEQQLRALRKVVTPQTRIIAGAKARDIHTSTLELFEKVLGPTTTTLAWKKARLINCTFNEPPLADAPQTVSWKLEGTDWTIHNHANVFSRTGLDIGARFFMQHLPENLEGEIVDLGCGNGVIGLTLLDKNPQAKVVFVDESPMAVASSRLNVETNMPEALDRCEFMINNALSGVEPFRFNAVLCNPPFHQQHALTDNVAWEMFHHARRCLKINGELYIVANRHLDYFHKLKKIFGNCTTIATNNKFVVLKAVKLGRRR.

The protein belongs to the methyltransferase superfamily. RlmG family.

It is found in the cytoplasm. It catalyses the reaction guanosine(1835) in 23S rRNA + S-adenosyl-L-methionine = N(2)-methylguanosine(1835) in 23S rRNA + S-adenosyl-L-homocysteine + H(+). Functionally, specifically methylates the guanine in position 1835 (m2G1835) of 23S rRNA. This is Ribosomal RNA large subunit methyltransferase G from Escherichia coli O157:H7.